Consider the following 106-residue polypeptide: Chaperone modulatory protein CbpM (106 aa).

It belongs to the CbpM family.

In terms of biological role, interacts with CbpA and inhibits both the DnaJ-like co-chaperone activity and the DNA binding activity of CbpA. Together with CbpA, modulates the activity of the DnaK chaperone system. Does not inhibit the co-chaperone activity of DnaJ. This chain is Chaperone modulatory protein CbpM, found in Coxiella burnetii (strain CbuK_Q154) (Coxiella burnetii (strain Q154)).